Reading from the N-terminus, the 3010-residue chain is Genome polyprotein (3010 aa).

At Ser2 the chain carries N-acetylserine; by host. The interval 2 to 23 (STNPKPQRKTKRNTNRRPQDVK) is interaction with STAT1. Residues 2–58 (STNPKPQRKTKRNTNRRPQDVKFPGGGQIVGGVYLLPRRGPRLGVRATRKTSERSQP) form an interaction with EIF2AK2/PKR region. Positions 2 to 59 (STNPKPQRKTKRNTNRRPQDVKFPGGGQIVGGVYLLPRRGPRLGVRATRKTSERSQPR) are interaction with DDX3X. The segment at 2–75 (STNPKPQRKT…PKARQPEGRA (74 aa)) is disordered. Residues 2 to 168 (STNPKPQRKT…EDGVNYATGN (167 aa)) are Cytoplasmic-facing. 2 short sequence motifs (nuclear localization signal) span residues 5–13 (PKPQRKTKR) and 38–43 (PRRGPR). The segment covering 7–16 (PQRKTKRNTN) has biased composition (basic residues). Residues 32 to 47 (GGVYLLPRRGPRLGVR) are compositionally biased toward low complexity. At Ser53 the chain carries Phosphoserine; by host. Short sequence motifs (nuclear localization signal) lie at residues 58-64 (PRGRRQP) and 66-71 (PKARQP). Residue Ser99 is modified to Phosphoserine; by host. Positions 112-152 (PRRRSRNLGKVIDTLTCGFADLMGYIPLVGAPLGGAARALA) are important for endoplasmic reticulum and mitochondrial localization. Phosphoserine; by host PKA is present on Ser116. Residues 122–173 (VIDTLTCGFADLMGYIPLVGAPLGGAARALAHGVRVLEDGVNYATGNLPGCS) are interaction with APOA2. Residues 164-167 (YATG) form an important for lipid droplets localization region. Residues 169 to 189 (LPGCSFSIFLLALLSCLTIPA) traverse the membrane as a helical segment. A propeptide spans 178-191 (LLALLSCLTIPASA) (ER anchor for the core protein, removed in mature form by host signal peptidase). The Lumenal segment spans residues 190 to 358 (SAYEVRNVSG…AGAHWGVLAG (169 aa)). Asn196, Asn209, Asn234, and Asn250 each carry an N-linked (GlcNAc...) asparagine; by host glycan. An important for fusion region spans residues 265–296 (LVGAAALCSAMYVGDLCGSVFLVAQLFTFSPR). Asn305 carries N-linked (GlcNAc...) asparagine; by host glycosylation. The helical transmembrane segment at 359–379 (LAYYSMVGNWAKVLIVMLLFA) threads the bilayer. Topologically, residues 380-725 (GVDGGTYVTG…WEYVLLLFLL (346 aa)) are lumenal. The interval 385-411 (TYVTGGTMAKNTLGITSLFSPGSSQKI) is HVR1. Residue Asn417 is glycosylated (N-linked (GlcNAc...) asparagine; by host). N-linked (GlcNAc...) (high mannose) asparagine; by host glycans are attached at residues Asn423, Asn430, and Asn448. Disulfide bonds link Cys429-Cys552, Cys452-Cys459, Cys486-Cys494, and Cys503-Cys508. Positions 474-482 (YNESHSSDQ) are HVR2. Residues 480–493 (SDQRPYCWHYAPRP) form a CD81-binding 1 region. Asn532 carries an N-linked (GlcNAc...) (high mannose) asparagine; by host glycan. The segment at 544-551 (PPQGNWFG) is CD81-binding 2. N-linked (GlcNAc...) (high mannose) asparagine; by host glycosylation occurs at Asn556. Cys564 and Cys569 are disulfide-bonded. A glycan (N-linked (GlcNAc...) (high mannose) asparagine; by host) is linked at Asn576. 3 disulfide bridges follow: Cys581–Cys585, Cys597–Cys620, and Cys607–Cys644. 2 N-linked (GlcNAc...) (high mannose) asparagine; by host glycosylation sites follow: Asn623 and Asn645. A disulfide bridge links Cys652 with Cys677. Residues 660–671 (SELSPLLLSTTE) form an EIF2AK2/eIF2-alpha phosphorylation homology domain (PePHD) region. Residues 726–746 (LADARVCACLWMMLLIAQAEA) form a helical membrane-spanning segment. Residues 747–757 (ALENLVVLNAA) are Lumenal-facing. Residues 758 to 778 (SVAGAHGILSFLVFFCAAWYI) form a helical membrane-spanning segment. The Cytoplasmic segment spans residues 779–781 (KGR). A helical transmembrane segment spans residues 782–803 (LVPGAAYALYGVWPLLLLLLAL). Residues 804–813 (PPRAYAMDRE) lie on the Lumenal side of the membrane. The chain crosses the membrane as a helical span at residues 814-834 (MAASCGGAVFVGLILLTLSPH). The Cytoplasmic portion of the chain corresponds to 835–838 (YKLF). Residues 839 to 859 (LARLIWWLQYFITRAEAHLQV) form a helical membrane-spanning segment. The Lumenal segment spans residues 860–881 (WIPPLNVRGGRDAVILLTCAIH). The chain crosses the membrane as a helical span at residues 882-902 (PELIFTITKILLAILGPLMVL). One can recognise a Peptidase C18 domain in the interval 903–1026 (QAGITKVPYF…SLEGQGWRLL (124 aa)). The Cytoplasmic segment spans residues 903 to 1657 (QAGITKVPYF…CMSADLEVVT (755 aa)). The segment at 904-1206 (AGITKVPYFV…PVESMETTMR (303 aa)) is protease NS2-3. The S-palmitoyl cysteine; by host moiety is linked to residue Cys922. The segment at 929–949 (AGGHYVQMALMKLAALTGTYV) is interaction with host SCPS1. Active-site for protease NS2 activity; shared with dimeric partner residues include His952, Glu972, and Cys993. The region spanning 1027 to 1208 (APITAYSQQT…ESMETTMRSP (182 aa)) is the Peptidase S29 domain. Active-site charge relay system; for serine protease NS3 activity residues include His1083 and Asp1107. Residues Cys1123 and Cys1125 each contribute to the Zn(2+) site. The active-site Charge relay system; for serine protease NS3 activity is Ser1165. Residues Cys1171 and His1175 each contribute to the Zn(2+) site. A Helicase ATP-binding domain is found at 1217 to 1369 (PAVPQTFQVA…PNIEEVALSS (153 aa)). 1230–1237 (APTGSGKS) contacts ATP. Residues Ser1237 and Glu1317 each coordinate Mg(2+). Positions 1316–1319 (DECH) match the DECH box motif. The segment at 1486–1497 (QRRGRTGRGRMG) is RNA-binding. The chain crosses the membrane as a helical span at residues 1658-1678 (STWVLVGGVLAALAAYCLTTG). The interval 1679–1690 (SVVIVGRIILSG) is NS3-binding. The Cytoplasmic portion of the chain corresponds to 1679–1805 (SVVIVGRIIL…SITSPLTTQH (127 aa)). A helical transmembrane segment spans residues 1806-1826 (TLLFNILGGWVAAQLAPPSAA). Residues 1827–1828 (SA) lie on the Lumenal side of the membrane. Residues 1829–1849 (FVGAGIAGAAVGSIGLGKVLV) form a helical membrane-spanning segment. Residues 1833-1861 (GIAGAAVGSIGLGKVLVDILAGYGAGVAG) form a glycine zipper region. Residue Asp1850 is a topological domain, cytoplasmic. A helical membrane pass occupies residues 1851 to 1871 (ILAGYGAGVAGALVAFKVMSG). Over 1872–1881 (EMPSTEDLVN) the chain is Lumenal. Residues 1882-1902 (LLPAILSPGALVVGVVCAAIL) form a helical membrane-spanning segment. At 1903 to 1972 (RRHVGPGEGA…WINEDCSTPC (70 aa)) the chain is on the cytoplasmic side. S-palmitoyl cysteine; by host attachment occurs at residues Cys1968 and Cys1972. The stretch at 1973-2003 (SGSWLRDVWDWICTVLTDFKTWLQSKLLPRL) is an intramembrane region. The interval 1978-1998 (RDVWDWICTVLTDFKTWLQSK) is membrane-binding. The Cytoplasmic portion of the chain corresponds to 2004–2989 (PGVPFFSCQR…YHSLSRARPR (986 aa)). The segment at 2005–2221 (GVPFFSCQRG…KATCTTRHDS (217 aa)) is RNA-binding. 4 residues coordinate Zn(2+): Cys2011, Cys2029, Cys2031, and Cys2052. The tract at residues 2120–2208 (EFFTEVDGVR…ASSSASQLSA (89 aa)) is FKBP8-binding. A transcriptional activation region spans residues 2120–2332 (EFFTEVDGVR…PIPPPRRKRT (213 aa)). The interaction with non-structural protein 4A stretch occupies residues 2135–2139 (PACKP). Residues 2187-2219 (KRRLARGSPPSLASSSASQLSAPSLKATCTTRH) form a disordered region. Residues 2189-2441 (RLARGSPPSL…PCAAEETKLP (253 aa)) form an interaction with host SKP2 region. Ser2194 carries the phosphoserine; by host; in p56 modification. Low complexity predominate over residues 2194-2211 (SPPSLASSSASQLSAPSL). At Ser2197 the chain carries Phosphoserine; by host; in p58. At Ser2201 the chain carries Phosphoserine; by host; in p56 and p58, regulates intracellular NS5A distribution. 3 positions are modified to phosphoserine; by host; in p58: Ser2204, Ser2207, and Ser2210. 2 ISDR regions span residues 2206-2245 (LSAP…TRVE) and 2210-2249 (SLKA…SENK). The segment at 2210–2275 (SLKATCTTRH…REVSVPAEIL (66 aa)) is EIF2AK2/PKR-binding. Positions 2249 to 2306 (KVVILDSFEPLQAEEDEREVSVPAEILRRSRKFPRAMPIWARPDYNPPLLESWKDPDY) are NS4B-binding. An SH3-binding motif is present at residues 2322-2325 (PPIP). A Nuclear localization signal motif is present at residues 2326–2334 (PPRRKRTVV). Residues 2332–2441 (TVVLSESTVS…PCAAEETKLP (110 aa)) form an interaction with host IFI27 region. Lys2350 is covalently cross-linked (Glycyl lysine isopeptide (Lys-Gly) (interchain with G-Cter in ubiquitin)). The segment covering 2351–2371 (TFGSSESSAVDSGTATASPDQ) has biased composition (polar residues). The tract at residues 2351–2407 (TFGSSESSAVDSGTATASPDQPSDDGDAGSDVESYSSMPPLEGEPGDPDLSDGSWST) is disordered. A V3 region spans residues 2354–2377 (SSESSAVDSGTATASPDQPSDDGD). Residues Ser2448 and Ser2461 each carry the phosphoserine; by host modification. Positions 2633 to 2751 (PMGFAYDTRC…ICESAGTQED (119 aa)) constitute a RdRp catalytic domain. Mg(2+)-binding residues include Asp2639, Asp2737, and Asp2738. Residues 2990–3010 (WFMWCLLLLSVGVGIYLLPNR) traverse the membrane as a helical segment.

The protein belongs to the hepacivirus polyprotein family. As to quaternary structure, homooligomer. Interacts with E1 (via C-terminus). Interacts with the non-structural protein 5A. Interacts (via N-terminus) with host STAT1 (via SH2 domain); this interaction results in decreased STAT1 phosphorylation and ubiquitin-mediated proteasome-dependent STAT1 degradation, leading to decreased IFN-stimulated gene transcription. Interacts with host STAT3; this interaction constitutively activates STAT3. Interacts with host LTBR receptor. Interacts with host TNFRSF1A receptor and possibly induces apoptosis. Interacts with host HNRPK. Interacts with host YWHAE. Interacts with host UBE3A/E6AP. Interacts with host DDX3X. Interacts with host APOA2. Interacts with host RXRA protein. Interacts with host SP110 isoform 3/Sp110b; this interaction sequesters the transcriptional corepressor SP110 away from the nucleus. Interacts with host CREB3 nuclear transcription protein; this interaction triggers cell transformation. Interacts with host ACY3. Interacts with host C1QR1. Interacts with host RBM24; this interaction, which enhances the interaction of the mature core protein with 5'-UTR, may inhibit viral translation and favor replication. Interacts with host EIF2AK2/PKR; this interaction induces the autophosphorylation of EIF2AK2. Part of the viral assembly initiation complex composed of NS2, E1, E2, NS3, NS4A, NS5A and the mature core protein. Forms a heterodimer with envelope glycoprotein E2. Interacts with mature core protein. Interacts with protease NS2. The heterodimer E1/E2 interacts with host CLDN1; this interaction plays a role in viral entry into host cell. Interacts with host SPSB2 (via C-terminus). Part of the viral assembly initiation complex composed of NS2, E1, E2, NS3, NS4A, NS5A and the mature core protein. Interacts with human PLSCR1. Interacts with host NEURL3; this interaction prevents E1 binding to glycoprotein E2. In terms of assembly, forms a heterodimer with envelope glycoprotein E1. Interacts with host CD81 and SCARB1 receptors; these interactions play a role in viral entry into host cell. Interacts with host EIF2AK2/PKR; this interaction inhibits EIF2AK2 and probably allows the virus to evade the innate immune response. Interacts with host CD209/DC-SIGN and CLEC4M/DC-SIGNR. Interact with host SPCS1; this interaction is essential for viral particle assembly. Interacts with protease NS2. The heterodimer E1/E2 interacts with host CLDN1; this interaction plays a role in viral entry into host cell. Part of the viral assembly initiation complex composed of NS2, E1, E2, NS3, NS4A, NS5A and the mature core protein. Interacts with host SLC3A2/4F2hc; the interaction may facilitate viral entry into host cell. Interacts with human PLSCR1. As to quaternary structure, homohexamer. Homoheptamer. Interacts with protease NS2. Homodimer. Interacts with host SPCS1; this interaction is essential for viral particle assembly. Interacts with envelope glycoprotein E1. Interacts with envelope glycoprotein E2. Interacts with viroporin p7. Interacts with serine protease/helicase NS3. Part of the replication complex composed of NS2, NS3, NS4A, NS4B, NS5A and the RNA-directed RNA polymerase embedded in an ER-derived membranous web. Part of the viral assembly initiation complex composed of NS2, E1, E2, NS3, NS4A, NS5A and the mature core protein. In terms of assembly, interacts with protease NS2. Interacts with non-structural protein 4A; this interaction stabilizes the folding of NS3 serine protease. NS3-NS4A interaction is essential for NS3 activation and allows membrane anchorage of the latter. NS3/NS4A complex also prevents phosphorylation of host IRF3, thus preventing the establishment of dsRNA induced antiviral state. Interacts with host MAVS; this interaction leads to the cleavage and inhibition of host MAVS. Interacts with host TICAM1; this interaction leads to the cleavage and inhibition of host TICAM1. Interacts with host TANK-binding kinase/TBK1; this interaction results in the inhibition of the association between TBK1 and IRF3, which leads to the inhibition of IRF3 activation. Interacts with host RBM24. Part of the replication complex composed of NS2, NS3, NS4A, NS4B, NS5A and the RNA-directed RNA polymerase embedded in an ER-derived membranous web. Part of the viral assembly initiation complex composed of NS2, E1, E2, NS3, NS4A, NS5A and the mature core protein. As to quaternary structure, monomer. Homodimer; dimerization is required for RNA-binding. Interacts with the mature core protein. Interacts with host GRB2. Interacts with host BIN1. Interacts with host PIK3R1. Interacts with host SRCAP. Interacts with host FKBP8. Interacts with host VAPB. Interacts with host EIF2AK2/PKR; this interaction leads to disruption of EIF2AK2 dimerization by NS5A and probably allows the virus to evade the innate immune response. Interacts (via N-terminus) with host PACSIN2 (via N-terminus); this interaction attenuates protein kinase C alpha-mediated phosphorylation of PACSIN2 by disrupting the interaction between PACSIN2 and PRKCA. Interacts (via N-terminus) with host SRC kinase (via SH2 domain). Interacts with most Src-family kinases. Interacts with host IFI27 and SKP2; promotes the ubiquitin-mediated proteasomal degradation of NS5A. Interacts (via N-terminus) with non-structural protein 4A. Interacts with non-structural protein 4B. Interacts with RNA-directed RNA polymerase. Part of the replication complex composed of NS2, NS3, NS4A, NS4B, NS5A and the RNA-directed RNA polymerase embedded in an ER-derived membranous web. Interacts with host GPS2. Interacts with host TNFRSF21; this interaction allows the modulation by the virus of JNK, p38 MAPK, STAT3, and Akt signaling pathways in a DR6-dependent manner. Interacts (via N-terminus) with host CIDEB (via N-terminus); this interaction seems to regulate the association of HCV particles with APOE. Interacts with host CHKA/Choline Kinase-alpha; CHKA bridges host PI4KA and NS5A and potentiates NS5A-stimulated PI4KA activity, which then facilitates the targeting of the ternary complex to the ER for viral replication. Interacts with host SPSB2 (via C-terminus); this interaction targets NS5A for ubiquitination and degradation. Part of the viral assembly initiation complex composed of NS2, E1, E2, NS3, NS4A, NS5A and the mature core protein. Zn(2+) is required as a cofactor. Requires Mg(2+) as cofactor. Post-translationally, specific enzymatic cleavages in vivo yield mature proteins. The structural proteins, core, E1, E2 and p7 are produced by proteolytic processing by host signal peptidases. The core protein precursor is synthesized as a 23 kDa, which is retained in the ER membrane through the hydrophobic signal peptide. Cleavage by the signal peptidase releases the 21 kDa mature core protein. The cleavage of the core protein precursor occurs between aminoacids 176 and 188 but the exact cleavage site is not known. Some degraded forms of the core protein appear as well during the course of infection. The other proteins (p7, NS2, NS3, NS4A, NS4B, NS5A and NS5B) are cleaved by the viral proteases. Autoprocessing between NS2 and NS3 is mediated by the NS2 cysteine protease catalytic domain and regulated by the NS3 N-terminal domain. In terms of processing, phosphorylated by host PKC and PKA. Ubiquitinated; mediated by UBE3A and leading to core protein subsequent proteasomal degradation. Post-translationally, highly N-glycosylated. In terms of processing, palmitoylation is required for NS2/3 autoprocessing and E2 recruitment to membranes. Palmitoylated. This modification may play a role in its polymerization or in protein-protein interactions. Post-translationally, cleaved by host caspases which are probably activated by the viral infection. In terms of processing, ubiquitinated. Ubiquitination, most probably at Lys-2350, mediated by host IFI27 and SKP2 leads to proteasomal degradation, restricting viral infection. Ubiquitination by host TRIM22 leads to interruption of viral replication. Phosphorylated on serines in a basal form termed p56. p58 is a hyperphosphorylated form of p56. p56 and p58 coexist in the cell in roughly equivalent amounts. Hyperphosphorylation is dependent on the presence of NS4A. Host CSNK1A1/CKI-alpha or RPS6KB1 kinases may be responsible for NS5A phosphorylation. Post-translationally, tyrosine phosphorylation is essential for the interaction with host SRC. In terms of processing, the N-terminus is phosphorylated by host PRK2/PKN2.

Its subcellular location is the host endoplasmic reticulum membrane. The protein localises to the host mitochondrion membrane. It is found in the virion. It localises to the host cytoplasm. The protein resides in the host nucleus. Its subcellular location is the host lipid droplet. The protein localises to the virion membrane. It is found in the host mitochondrion. It localises to the host cell membrane. The protein resides in the host perinuclear region. It carries out the reaction Hydrolysis of four peptide bonds in the viral precursor polyprotein, commonly with Asp or Glu in the P6 position, Cys or Thr in P1 and Ser or Ala in P1'.. The enzyme catalyses a ribonucleoside 5'-triphosphate + H2O = a ribonucleoside 5'-diphosphate + phosphate + H(+). It catalyses the reaction ATP + H2O = ADP + phosphate + H(+). The catalysed reaction is RNA(n) + a ribonucleoside 5'-triphosphate = RNA(n+1) + diphosphate. Inhibited by the antiviral drug hexamethylene amiloride. Inhibition by amantadine appears to be genotype-dependent. Also inhibited by long-alkyl-chain iminosugar derivatives. With respect to regulation, activity is up-regulated by PRK2/PKN2-mediated phosphorylation. Its function is as follows. Packages viral RNA to form a viral nucleocapsid, and promotes virion budding. Participates in the viral particle production as a result of its interaction with the non-structural protein 5A. Binds RNA and may function as a RNA chaperone to induce the RNA structural rearrangements taking place during virus replication. Modulates viral translation initiation by interacting with viral IRES and 40S ribosomal subunit. Affects various cell signaling pathways, host immunity and lipid metabolism. Prevents the establishment of cellular antiviral state by blocking the interferon-alpha/beta (IFN-alpha/beta) and IFN-gamma signaling pathways and by blocking the formation of phosphorylated STAT1 and promoting ubiquitin-mediated proteasome-dependent degradation of STAT1. Activates STAT3 leading to cellular transformation. Regulates the activity of cellular genes, including c-myc and c-fos. May repress the promoter of p53, and sequester CREB3 and SP110 isoform 3/Sp110b in the cytoplasm. Represses cell cycle negative regulating factor CDKN1A, thereby interrupting an important check point of normal cell cycle regulation. Targets transcription factors involved in the regulation of inflammatory responses and in the immune response: suppresses NF-kappa-B activation, and activates AP-1. Binds to dendritic cells (DCs) via C1QR1, resulting in down-regulation of T-lymphocytes proliferation. Alters lipid metabolism by interacting with hepatocellular proteins involved in lipid accumulation and storage. Induces up-regulation of FAS promoter activity, and thereby contributes to the increased triglyceride accumulation in hepatocytes (steatosis). Functionally, forms a heterodimer with envelope glycoprotein E2, which mediates virus attachment to the host cell, virion internalization through clathrin-dependent endocytosis and fusion with host membrane. Fusion with the host cell is most likely mediated by both E1 and E2, through conformational rearrangements of the heterodimer required for fusion rather than a classical class II fusion mechanism. E1/E2 heterodimer binds host apolipoproteins such as APOB and APOE thereby forming a lipo-viro-particle (LVP). APOE associated to the LVP allows the initial virus attachment to cell surface receptors such as the heparan sulfate proteoglycans (HSPGs), syndecan-1 (SDC1), syndecan-1 (SDC2), the low-density lipoprotein receptor (LDLR) and scavenger receptor class B type I (SCARB1). The cholesterol transfer activity of SCARB1 allows E2 exposure and binding of E2 to SCARB1 and the tetraspanin CD81. E1/E2 heterodimer binding on CD81 activates the epithelial growth factor receptor (EGFR) signaling pathway. Diffusion of the complex E1-E2-EGFR-SCARB1-CD81 to the cell lateral membrane allows further interaction with Claudin 1 (CLDN1) and occludin (OCLN) to finally trigger HCV entry. In terms of biological role, forms a heterodimer with envelope glycoprotein E1, which mediates virus attachment to the host cell, virion internalization through clathrin-dependent endocytosis and fusion with host membrane. Fusion with the host cell is most likely mediated by both E1 and E2, through conformational rearrangements of the heterodimer required for fusion rather than a classical class II fusion mechanism. The interaction between envelope glycoprotein E2 and host apolipoprotein E/APOE allows the proper assembly, maturation and infectivity of the viral particles. This interaction is probably promoted via the up-regulation of cellular autophagy by the virus. E1/E2 heterodimer binds host apolipoproteins such as APOB and APOE thereby forming a lipo-viro-particle (LVP). APOE associated to the LVP allows the initial virus attachment to cell surface receptors such as the heparan sulfate proteoglycans (HSPGs), syndecan-1 (SDC1), syndecan-1 (SDC2), the low-density lipoprotein receptor (LDLR) and scavenger receptor class B type I (SCARB1). The cholesterol transfer activity of SCARB1 allows E2 exposure and binding of E2 to SCARB1 and the tetraspanin CD81. E1/E2 heterodimer binding on CD81 activates the epithelial growth factor receptor (EGFR) signaling pathway. Diffusion of the complex E1-E2-EGFR-SCARB1-CD81 to the cell lateral membrane allows further interaction with Claudin 1 (CLDN1) and occludin (OCLN) to finally trigger HCV entry. Inhibits host EIF2AK2/PKR activation, preventing the establishment of an antiviral state. Viral ligand for CD209/DC-SIGN and CLEC4M/DC-SIGNR, which are respectively found on dendritic cells (DCs), and on liver sinusoidal endothelial cells and macrophage-like cells of lymph node sinuses. These interactions allow the capture of circulating HCV particles by these cells and subsequent facilitated transmission to permissive cells such as hepatocytes and lymphocyte subpopulations. The interaction between E2 and host amino acid transporter complex formed by SLC3A2 and SLC7A5/LAT1 may facilitate viral entry into host cell. Ion channel protein that acts as a viroporin and plays an essential role in the assembly, envelopment and secretion of viral particles. Regulates the host cell secretory pathway, which induces the intracellular retention of viral glycoproteins and favors assembly of viral particles. Creates a pore in acidic organelles and releases Ca(2+) and H(+) in the cytoplasm of infected cells, leading to a productive viral infection. High levels of cytoplasmic Ca(2+) may trigger membrane trafficking and transport of viral ER-associated proteins to viroplasms, sites of viral genome replication. This ionic imbalance induces the assembly of the inflammasome complex, which triggers the maturation of pro-IL-1beta into IL-1beta through the action of caspase-1. Targets also host mitochondria and induces mitochondrial depolarization. In addition of its role as a viroporin, acts as a lipid raft adhesion factor. Its function is as follows. Cysteine protease required for the proteolytic auto-cleavage between the non-structural proteins NS2 and NS3. The N-terminus of NS3 is required for the function of NS2 protease (active region NS2-3). Promotes the initiation of viral particle assembly by mediating the interaction between structural and non-structural proteins. Functionally, displays three enzymatic activities: serine protease with a chymotrypsin-like fold, NTPase and RNA helicase. NS3 serine protease, in association with NS4A, is responsible for the cleavages of NS3-NS4A, NS4A-NS4B, NS4B-NS5A and NS5A-NS5B. The NS3/NS4A complex prevents phosphorylation of host IRF3, thus preventing the establishment of dsRNA induced antiviral state. The NS3/NS4A complex induces host amino acid transporter component SLC3A2, thus contributing to HCV propagation. NS3 RNA helicase binds to RNA and unwinds both dsDNA and dsRNA in the 3' to 5' direction, and likely resolves RNA complicated stable secondary structures in the template strand. Binds a single ATP and catalyzes the unzipping of a single base pair of dsRNA. Inhibits host antiviral proteins TBK1 and IRF3 thereby preventing the establishment of an antiviral state. Cleaves host MAVS/CARDIF thereby preventing the establishment of an antiviral state. Cleaves host TICAM1/TRIF, thereby disrupting TLR3 signaling and preventing the establishment of an antiviral state. In terms of biological role, peptide cofactor which forms a non-covalent complex with the N-terminal of NS3 serine protease. The NS3/NS4A complex prevents phosphorylation of host IRF3, thus preventing the establishment of dsRNA induced antiviral state. The NS3/NS4A complex induces host amino acid transporter component SLC3A2, thus contributing to HCV propagation. Induces a specific membrane alteration that serves as a scaffold for the virus replication complex. This membrane alteration gives rise to the so-called ER-derived membranous web that contains the replication complex. NS4B self-interaction contributes to its function in membranous web formation. Promotes host TRIF protein degradation in a CASP8-dependent manner thereby inhibiting host TLR3-mediated interferon signaling. Disrupts the interaction between STING and TBK1 contributing to the inhibition of interferon signaling. Its function is as follows. Phosphorylated protein that is indispensable for viral replication and assembly. Both hypo- and hyperphosphorylated states are required for the viral life cycle. The hyperphosphorylated form of NS5A is an inhibitor of viral replication. Involved in RNA-binding and especially in binding to the viral genome. Zinc is essential for RNA-binding. Participates in the viral particle production as a result of its interaction with the viral mature core protein. Its interaction with host VAPB may target the viral replication complex to vesicles. Down-regulates viral IRES translation initiation. Mediates interferon resistance, presumably by interacting with and inhibiting host EIF2AK2/PKR. Prevents BIN1-induced apoptosis. Acts as a transcriptional activator of some host genes important for viral replication when localized in the nucleus. Via the interaction with host PACSIN2, modulates lipid droplet formation in order to promote virion assembly. Modulates TNFRSF21/DR6 signaling pathway for viral propagation. Functionally, RNA-dependent RNA polymerase that performs primer-template recognition and RNA synthesis during viral replication. Initiates RNA transcription/replication at a flavin adenine dinucleotide (FAD), resulting in a 5'- FAD cap on viral RNAs. In this way, recognition of viral 5' RNA by host pattern recognition receptors can be bypassed, thereby evading activation of antiviral pathways. The protein is Genome polyprotein of Hepatitis C virus genotype 1b (isolate Con1) (HCV).